Here is a 167-residue protein sequence, read N- to C-terminus: ATP synthase subunit delta, mitochondrial (167 aa).

The N-terminal 28 residues, 1-28 (MFRLSNYMLRKSQFPQGLVRAPFGIRGY), are a transit peptide targeting the mitochondrion.

Belongs to the ATPase epsilon chain family. As to quaternary structure, F-type ATPases have 2 components, CF(1) - the catalytic core - and CF(0) - the membrane proton channel. CF(1) has five subunits: alpha(3), beta(3), gamma(1), delta(1), epsilon(1). CF(0) has three main subunits: a, b and c.

The protein localises to the mitochondrion. It localises to the mitochondrion inner membrane. Mitochondrial membrane ATP synthase (F(1)F(0) ATP synthase or Complex V) produces ATP from ADP in the presence of a proton gradient across the membrane which is generated by electron transport complexes of the respiratory chain. F-type ATPases consist of two structural domains, F(1) - containing the extramembraneous catalytic core, and F(0) - containing the membrane proton channel, linked together by a central stalk and a peripheral stalk. During catalysis, ATP turnover in the catalytic domain of F(1) is coupled via a rotary mechanism of the central stalk subunits to proton translocation. Part of the complex F(1) domain and of the central stalk which is part of the complex rotary element. Rotation of the central stalk against the surrounding alpha(3)beta(3) subunits leads to hydrolysis of ATP in three separate catalytic sites on the beta subunits. The polypeptide is ATP synthase subunit delta, mitochondrial (atp16) (Schizosaccharomyces pombe (strain 972 / ATCC 24843) (Fission yeast)).